The chain runs to 32 residues: Peptide II.10.10 (32 aa).

Intrachain disulfides connect Cys5-Cys24, Cys10-Cys29, and Cys14-Cys31.

It belongs to the short scorpion toxin superfamily. Potassium channel inhibitor family. Alpha-KTx 10 subfamily. As to expression, expressed by the venom gland.

The protein localises to the secreted. The protein is Peptide II.10.10 of Centruroides tecomanus (Scorpion).